The sequence spans 146 residues: Hemoglobin subunit beta (146 aa).

In terms of domain architecture, Globin spans 2-146; that stretch reads QWAAEEKQLI…VAHALARKYH (145 aa). Heme b contacts are provided by His-63 and His-92.

It belongs to the globin family. In terms of assembly, heterotetramer of two alpha chains and two beta chains. As to expression, red blood cells.

In terms of biological role, involved in oxygen transport from the lung to the various peripheral tissues. The polypeptide is Hemoglobin subunit beta (HBB) (Accipiter gentilis (Northern goshawk)).